The following is a 66-amino-acid chain: ATP synthase protein 8 (66 aa).

A helical transmembrane segment spans residues 8–24 (PWPMVIMSMILTLFYIT). Position 54 is an N6-acetyllysine; alternate (lysine 54). Lysine 54 carries the post-translational modification N6-succinyllysine; alternate. Lysine 57 carries the post-translational modification N6-acetyllysine.

Belongs to the ATPase protein 8 family. F-type ATPases have 2 components, CF(1) - the catalytic core - and CF(0) - the membrane proton channel. Component of an ATP synthase complex composed of ATP5PB, ATP5MC1, ATP5F1E, ATP5PD, ATP5ME, ATP5PF, ATP5MF, MT-ATP6, MT-ATP8, ATP5F1A, ATP5F1B, ATP5F1D, ATP5F1C, ATP5PO, ATP5MG, ATP5MK and ATP5MJ. Interacts with PRICKLE3.

It localises to the mitochondrion membrane. Its function is as follows. Mitochondrial membrane ATP synthase (F(1)F(0) ATP synthase or Complex V) produces ATP from ADP in the presence of a proton gradient across the membrane which is generated by electron transport complexes of the respiratory chain. F-type ATPases consist of two structural domains, F(1) - containing the extramembraneous catalytic core and F(0) - containing the membrane proton channel, linked together by a central stalk and a peripheral stalk. During catalysis, ATP synthesis in the catalytic domain of F(1) is coupled via a rotary mechanism of the central stalk subunits to proton translocation. Part of the complex F(0) domain. Minor subunit located with subunit a in the membrane. This is ATP synthase protein 8 (MT-ATP8) from Alouatta guariba (Brown howler monkey).